A 951-amino-acid polypeptide reads, in one-letter code: MELPKETIEQLQNLFIAANRPEKEIREEATSKIQKFVKETPNSIITLLVFQNLKTIDAGARTLSAITFKNLVKDSWVDGDEVENPIPSNDKEMVKSLLLNFILSAVNNTTQSQLVESLSMIGVSDFPQQWPSILPELIKQMESNTDIPTLSIILRVLHSLLKKYRGQERNNQSLSELKYILSILPTPYLSLLIKTGVAVDANLQNEQQLVLLLNCVHFLLEIFFSMSSVDLPEFFEDNLASFTNEFHRYLKFNTNFQSIILSSNDEEPSLLKKIQTSICEIINLYTQIYDEEFSSFLQPFVQVVWGLLTQTSKDICNDPFVYASIRFLGTVATSISHKIFESPETLKQICSMIVTPNIELRESDIELYEDNHVEYMRRDIEGSDSDTRRRAAIELVKGLRKYYENQVIQLLSVDINNLLQKYNSNREENWICKDSAIFLVTALAVKSGGSDESSESSKLVNVLDFFKSSIEPELSGATQTNKPILKADCLKFITIFRNQIPAEEYPRILQSVIPCLENPDFIIHTYASTCIDRLLSVKDGGVPRLSAEFISTNLTGLLLPLVGVFNFKDSKQNERAMRTIVRIVLMTQGKVSQQITIQLLQKFVSIIIEEAKNPSNHSFNHYCFEVVGTLLKGFSSEPEVTQIIMPLIEMVLQTNNAEFSPYCFQLLSILVENCRPEYLDLFRPILPIIFNDMTWARDADYPALVRLLQAFIKKEGSSIAPHLSAILGITEKLIMRVTHDHEAFLILETVVETLDIQFLEKYLGGIFSMILTRITKKKTLKVVRCFTIFFSIFMIKYGVVKTAQTVRAIKDSLWEDILIKLWLPTVEDINGSIEKKIISISLTNMICCNDILATPELWIKLIQCQSNVISGKKSQETEQAGAASDLYIDQAEANEGYVPTFTQLQFSKKVDVDPFPTISNPKEYFISTFQTFKSQNEMLVTPLLSTANIQL.

The 76-residue stretch at 29–104 folds into the Importin N-terminal domain; the sequence is ATSKIQKFVK…KSLLLNFILS (76 aa).

Belongs to the XPO2/CSE1 family.

It localises to the cytoplasm. It is found in the nucleus. Its function is as follows. Export receptor for importin alpha. Mediates importin-alpha re-export from the nucleus to the cytoplasm after import substrates have been released into the nucleoplasm. The sequence is that of Exportin-2 (xpo2) from Dictyostelium discoideum (Social amoeba).